The following is a 175-amino-acid chain: ATP synthase subunit b (175 aa).

Residues 23–43 (TGITFLVLLFVLGKFAWGPIV) traverse the membrane as a helical segment.

Belongs to the ATPase B chain family. As to quaternary structure, F-type ATPases have 2 components, F(1) - the catalytic core - and F(0) - the membrane proton channel. F(1) has five subunits: alpha(3), beta(3), gamma(1), delta(1), epsilon(1). F(0) has three main subunits: a(1), b(2) and c(10-14). The alpha and beta chains form an alternating ring which encloses part of the gamma chain. F(1) is attached to F(0) by a central stalk formed by the gamma and epsilon chains, while a peripheral stalk is formed by the delta and b chains.

The protein localises to the cell inner membrane. Its function is as follows. F(1)F(0) ATP synthase produces ATP from ADP in the presence of a proton or sodium gradient. F-type ATPases consist of two structural domains, F(1) containing the extramembraneous catalytic core and F(0) containing the membrane proton channel, linked together by a central stalk and a peripheral stalk. During catalysis, ATP synthesis in the catalytic domain of F(1) is coupled via a rotary mechanism of the central stalk subunits to proton translocation. Functionally, component of the F(0) channel, it forms part of the peripheral stalk, linking F(1) to F(0). The sequence is that of ATP synthase subunit b from Anaeromyxobacter sp. (strain Fw109-5).